The primary structure comprises 70 residues: DNA-directed RNA polymerase subunit epsilon (70 aa).

Belongs to the RNA polymerase subunit epsilon family. RNAP is composed of a core of 2 alpha, a beta and a beta' subunit. The core is associated with a delta subunit, and at least one of epsilon or omega. When a sigma factor is associated with the core the holoenzyme is formed, which can initiate transcription.

The enzyme catalyses RNA(n) + a ribonucleoside 5'-triphosphate = RNA(n+1) + diphosphate. Its function is as follows. A non-essential component of RNA polymerase (RNAP). This Bacillus mycoides (strain KBAB4) (Bacillus weihenstephanensis) protein is DNA-directed RNA polymerase subunit epsilon.